Consider the following 469-residue polypeptide: MTRPVRTRFAPSPTGFIHLGNIRSALYPWAFARKMKGTFVLRIEDTDLERSTEASVDAILEGMAWLGLDYDEGPYYQMQRMDRYREVLAQMLEKDLVYPCYMSTEELDALRERQRAAGEKPRYDGTWRPEPGKVLPEPPAGVTPVLRFRNPLTGSVVWDDAVKGRVEISNEELDDLVIARPDGTPTYNFCVVVDDLDMGITHVIRGDDHVNNTPRQINILRALGGEVPVYAHLPTVLNEQGEKMSKRHGAMSVMGYRDAGYLPEAVLNYLARLGWSHGDAEIFSREQFVEWFDLEHLGKSPAQYDHNKLNWLNNHYIKEADDARLAELAKPFFAALGIDADTIARGPDLVGVMGLMKDRASTVKEIAENSTMFYRSPAPDAQALAQHVTDAVRPALAEFAAALKTAEWTKEAIAAALKAVLGAHKLKMPQLAMPVRLLVAGTTHTPSIDAVLLLFGRDVVVSRLAAALA.

The 'HIGH' region motif lies at 11–21 (PSPTGFIHLGN). A compositionally biased stretch (basic and acidic residues) spans 118–131 (GEKPRYDGTWRPEP). A disordered region spans residues 118–139 (GEKPRYDGTWRPEPGKVLPEPP). Residues 243-247 (KMSKR) carry the 'KMSKS' region motif. Lysine 246 contributes to the ATP binding site.

The protein belongs to the class-I aminoacyl-tRNA synthetase family. Glutamate--tRNA ligase type 1 subfamily. In terms of assembly, monomer.

It localises to the cytoplasm. The catalysed reaction is tRNA(Glu) + L-glutamate + ATP = L-glutamyl-tRNA(Glu) + AMP + diphosphate. Functionally, catalyzes the attachment of glutamate to tRNA(Glu) in a two-step reaction: glutamate is first activated by ATP to form Glu-AMP and then transferred to the acceptor end of tRNA(Glu). This Burkholderia mallei (strain NCTC 10247) protein is Glutamate--tRNA ligase.